We begin with the raw amino-acid sequence, 179 residues long: ATP synthase subunit delta (179 aa).

The protein belongs to the ATPase delta chain family. In terms of assembly, F-type ATPases have 2 components, F(1) - the catalytic core - and F(0) - the membrane proton channel. F(1) has five subunits: alpha(3), beta(3), gamma(1), delta(1), epsilon(1). F(0) has three main subunits: a(1), b(2) and c(10-14). The alpha and beta chains form an alternating ring which encloses part of the gamma chain. F(1) is attached to F(0) by a central stalk formed by the gamma and epsilon chains, while a peripheral stalk is formed by the delta and b chains.

The protein resides in the cell membrane. F(1)F(0) ATP synthase produces ATP from ADP in the presence of a proton or sodium gradient. F-type ATPases consist of two structural domains, F(1) containing the extramembraneous catalytic core and F(0) containing the membrane proton channel, linked together by a central stalk and a peripheral stalk. During catalysis, ATP synthesis in the catalytic domain of F(1) is coupled via a rotary mechanism of the central stalk subunits to proton translocation. Functionally, this protein is part of the stalk that links CF(0) to CF(1). It either transmits conformational changes from CF(0) to CF(1) or is implicated in proton conduction. The sequence is that of ATP synthase subunit delta from Rubrobacter xylanophilus (strain DSM 9941 / JCM 11954 / NBRC 16129 / PRD-1).